A 129-amino-acid polypeptide reads, in one-letter code: MAKTPTRARKRVKKQVADGMAHIHASFNNTIVTITDRQGNALSWATAGGSGFRGSRKSTPFAAQIAAERAAEAAKEYGLKNVEVFVNGPGPGRESSIRALNAAGFRVTNITDVTPIPHNGCRPPKKRRV.

This sequence belongs to the universal ribosomal protein uS11 family. Part of the 30S ribosomal subunit. Interacts with proteins S7 and S18. Binds to IF-3.

Its function is as follows. Located on the platform of the 30S subunit, it bridges several disparate RNA helices of the 16S rRNA. Forms part of the Shine-Dalgarno cleft in the 70S ribosome. This chain is Small ribosomal subunit protein uS11, found in Psychromonas ingrahamii (strain DSM 17664 / CCUG 51855 / 37).